Reading from the N-terminus, the 327-residue chain is Beta-1,4-galactosyltransferase 7 (327 aa).

Over 1–30 the chain is Cytoplasmic; the sequence is MFPSRRKAAQLPWEDGRSGLLSGGLPRKCS. The chain crosses the membrane as a helical; Signal-anchor for type II membrane protein span at residues 31-51; the sequence is VFHLFVACLSLGFFSLLWLQL. At 52–327 the chain is on the lumenal side; it reads SCSGDVARAV…KTATPWCTFS (276 aa). Residues 63 to 87 form a disordered region; the sequence is GQGQETSGPPRACPPEPPPEHWEED. Residues 100 to 104 and 139 to 141 each bind UDP-alpha-D-galactose; these read PFRER and FNR. Residue N154 is glycosylated (N-linked (GlcNAc...) asparagine). Residues 164–165, Y194, and W224 contribute to the UDP-alpha-D-galactose site; that span reads VD. D165 is a binding site for Mn(2+). 226–229 provides a ligand contact to N-acetyl-D-glucosamine; the sequence is REDD. Position 257 (H257) interacts with Mn(2+). Residues 257 to 259 and R266 contribute to the UDP-alpha-D-galactose site; that span reads HLH. C316 and C324 are disulfide-bonded.

It belongs to the glycosyltransferase 7 family. The cofactor is Mn(2+). In terms of tissue distribution, high expression in heart, pancreas and liver, medium in placenta and kidney, low in brain, skeletal muscle and lung.

The protein localises to the golgi apparatus. The protein resides in the golgi stack membrane. The catalysed reaction is 3-O-(beta-D-xylosyl)-L-seryl-[protein] + UDP-alpha-D-galactose = 3-O-(beta-D-galactosyl-(1-&gt;4)-beta-D-xylosyl)-L-seryl-[protein] + UDP + H(+). It participates in protein modification; protein glycosylation. Required for the biosynthesis of the tetrasaccharide linkage region of proteoglycans, especially for small proteoglycans in skin fibroblasts. The sequence is that of Beta-1,4-galactosyltransferase 7 (B4GALT7) from Homo sapiens (Human).